Here is a 132-residue protein sequence, read N- to C-terminus: Large-conductance mechanosensitive channel (132 aa).

A run of 2 helical transmembrane segments spans residues 14-34 and 67-87; these read VIDL…VSSL and GNFI…FMFV.

This sequence belongs to the MscL family. As to quaternary structure, homopentamer.

It is found in the cell membrane. Functionally, channel that opens in response to stretch forces in the membrane lipid bilayer. May participate in the regulation of osmotic pressure changes within the cell. This Bacillus cereus (strain AH820) protein is Large-conductance mechanosensitive channel.